The following is a 487-amino-acid chain: Glutamyl-tRNA(Gln) amidotransferase subunit A (487 aa).

Catalysis depends on charge relay system residues Lys77 and Ser152. Ser176 functions as the Acyl-ester intermediate in the catalytic mechanism.

This sequence belongs to the amidase family. GatA subfamily. Heterotrimer of A, B and C subunits.

It carries out the reaction L-glutamyl-tRNA(Gln) + L-glutamine + ATP + H2O = L-glutaminyl-tRNA(Gln) + L-glutamate + ADP + phosphate + H(+). In terms of biological role, allows the formation of correctly charged Gln-tRNA(Gln) through the transamidation of misacylated Glu-tRNA(Gln) in organisms which lack glutaminyl-tRNA synthetase. The reaction takes place in the presence of glutamine and ATP through an activated gamma-phospho-Glu-tRNA(Gln). The polypeptide is Glutamyl-tRNA(Gln) amidotransferase subunit A (Lactiplantibacillus plantarum (strain ATCC BAA-793 / NCIMB 8826 / WCFS1) (Lactobacillus plantarum)).